A 262-amino-acid chain; its full sequence is Large ribosomal subunit protein uL5c (262 aa).

A chloroplast-targeting transit peptide spans 1–39 (MASPSLLQSSASSFHGRFSPLAAPSSARMLSPPLRNVVK).

It belongs to the universal ribosomal protein uL5 family. In terms of assembly, part of the 50S ribosomal subunit; contacts the 5S rRNA.

The protein resides in the plastid. Its subcellular location is the chloroplast. In terms of biological role, binds 5S rRNA, forms part of the central protuberance of the 50S subunit. In Arabidopsis thaliana (Mouse-ear cress), this protein is Large ribosomal subunit protein uL5c (RPL5).